Consider the following 478-residue polypeptide: Vitronectin (478 aa).

The signal sequence occupies residues 1 to 19; sequence MAPLRPFFILALVAWVSLA. In terms of domain architecture, SMB spans 20–63; sequence DQESCKGRCTQGFMASKKCQCDELCTYYQSCCADYMEQCKPQVT. Intrachain disulfides connect C24-C28, C24-C40, C28-C58, C38-C40, C38-C51, C44-C50, and C51-C58. A Cell attachment site motif is present at residues 64 to 66; sequence RGD. At T69 the chain carries Phosphothreonine. Sulfotyrosine is present on residues Y75, Y78, and Y80. The disordered stretch occupies residues 82–153; sequence EEPKNNTNTG…QGTPEFPEEE (72 aa). Residue N86 is glycosylated (N-linked (GlcNAc...) asparagine). The segment covering 86–99 has biased composition (polar residues); the sequence is NNTNTGVQPENTSP. A compositionally biased stretch (basic and acidic residues) spans 131–141; the sequence is EQQEEILRPDT. Hemopexin repeat units lie at residues 157-201, 202-249, and 250-304; these read GKPF…VWGI, EGPI…FSGI, and PDNV…FEHF. Residues N168 and N241 are each glycosylated (N-linked (GlcNAc...) asparagine). 2 positions are modified to sulfotyrosine: Y278 and Y281. The cysteines at positions 292 and 431 are disulfide-linked. Phosphoserine occurs at positions 311 and 362. Residues 359 to 395 form a disordered region; the sequence is LSHSAQAKKQKSKRRSRKRYRSRRGRGHRRSQSSNSR. Basic residues predominate over residues 364–389; it reads QAKKQKSKRRSRKRYRSRRGRGHRRS. Positions 366 to 399 are heparin-binding; it reads KKQKSKRRSRKRYRSRRGRGHRRSQSSNSRRSSR. A Phosphoserine; by PKA modification is found at S398. 3 positions are modified to sulfotyrosine: Y416, Y419, and Y421. Residues 420-473 form a Hemopexin 4 repeat; that stretch reads DYDMDWLVPATCEPIQSVYFFSGDKYYRVNLRTRRVDSVNPPYPRSIAQYWLGC.

In terms of assembly, interacts with SERPINE1/PAI1, insulin and C1QBP. Post-translationally, sulfated on tyrosine residues. N- and O-glycosylated. In terms of processing, it has been suggested that the active SMB domain may be permitted considerable disulfide bond heterogeneity or variability, thus two alternate disulfide patterns based on 3D structures are described with 1 disulfide bond conserved in both. As to expression, plasma.

It is found in the secreted. It localises to the extracellular space. Its function is as follows. Vitronectin is a cell adhesion and spreading factor found in serum and tissues. Vitronectin interact with glycosaminoglycans and proteoglycans. Is recognized by certain members of the integrin family and serves as a cell-to-substrate adhesion molecule. Inhibitor of the membrane-damaging effect of the terminal cytolytic complement pathway. The chain is Vitronectin (Vtn) from Mus musculus (Mouse).